The chain runs to 375 residues: MSCPVIELTQQLIRRPSLSPDDVGCQALMIERLRKIGFTIEHMDFGDTQNFWAWRGRGETLAFAGHTDVVPAGDVDRWINPPFEPTIRDGMLFGRGAADMKGSLAAMVVAAERFVAQHPHHRGRLAFLITSDEEASAKNGTVKVVEALMARNERLDYCLVGEPSSTEIVGDVVKNGRRGSLTCNLTIHGVQGHVAYPHLADNPVHRAAPFLNELVAIEWDRGNDFFPATSMQIANIQAGTGSNNVIPGELFVQFNFRFSTELTDEMIKERVHALLEKHQLRYTVDWWLSGQPFLTARGKLVDAVVNAIEHYNEIKPQLLTTGGTSDGRFIARMGAQVVELGPVNATIHKINECVNAADLQLLARMYQRIMEQLVA.

H66 provides a ligand contact to Zn(2+). Residue D68 is part of the active site. Residue D99 participates in Zn(2+) binding. E133 serves as the catalytic Proton acceptor. Zn(2+) contacts are provided by E134, E162, and H348.

This sequence belongs to the peptidase M20A family. DapE subfamily. In terms of assembly, homodimer. Zn(2+) serves as cofactor. The cofactor is Co(2+).

It catalyses the reaction N-succinyl-(2S,6S)-2,6-diaminopimelate + H2O = (2S,6S)-2,6-diaminopimelate + succinate. Its pathway is amino-acid biosynthesis; L-lysine biosynthesis via DAP pathway; LL-2,6-diaminopimelate from (S)-tetrahydrodipicolinate (succinylase route): step 3/3. Catalyzes the hydrolysis of N-succinyl-L,L-diaminopimelic acid (SDAP), forming succinate and LL-2,6-diaminopimelate (DAP), an intermediate involved in the bacterial biosynthesis of lysine and meso-diaminopimelic acid, an essential component of bacterial cell walls. The polypeptide is Succinyl-diaminopimelate desuccinylase (Salmonella typhi).